The following is a 472-amino-acid chain: 2-amino-4-ketopentanoate thiolase beta subunit (472 aa).

K102 is subject to N6-(pyridoxal phosphate)lysine. Pyridoxal 5'-phosphate-binding positions include N128 and A238–N242.

It belongs to the threonine synthase family. In terms of assembly, heterodimer with OrtA. Requires pyridoxal 5'-phosphate as cofactor.

The enzyme catalyses D-alanine + acetyl-CoA = (2R)-2-amino-4-oxopentanoate + CoA. Functionally, involved in the ornithine fermentation pathway. Catalyzes the thiolytic cleavage of 2-amino-4-ketopentanoate (AKP) with coenzyme A (CoA) to form acetyl-CoA and alanine. It is strictly specific for AKP. The chain is 2-amino-4-ketopentanoate thiolase beta subunit from Unknown prokaryotic organism.